The primary structure comprises 515 residues: Maturase K (515 aa).

It belongs to the intron maturase 2 family. MatK subfamily.

It is found in the plastid. The protein localises to the chloroplast. In terms of biological role, usually encoded in the trnK tRNA gene intron. Probably assists in splicing its own and other chloroplast group II introns. In Pinus attenuata (Knobcone pine), this protein is Maturase K.